Consider the following 815-residue polypeptide: Vacuolar proton translocating ATPase 100 kDa subunit (815 aa).

Residues 1 to 402 (MSFLRPSIWR…NAYGIAHYRE (402 aa)) lie on the Cytoplasmic side of the membrane. A helical transmembrane segment spans residues 403–421 (VNPAVLTIVTFPFLFGVMF). At 422 to 423 (GD) the chain is on the vacuolar side. Residues 424-440 (VGHGALLLLSALGLISL) form a helical membrane-spanning segment. Topologically, residues 441–454 (EKKLAGKKLNELIQ) are cytoplasmic. Residues 455-484 (MPFDGRYVLFLMSLFSIYVGFIYNECFSIP) traverse the membrane as a helical segment. Residues 485 to 530 (MNIFGSQYNLNSTTGLYTYQHTDRVYPVGVDPLWKGAPNELVYYNS) lie on the Vacuolar side of the membrane. The chain crosses the membrane as a helical span at residues 531 to 550 (FKMKLSIIFGVVQMSVGICF). The Cytoplasmic portion of the chain corresponds to 551-571 (SLLNYLNQKGPIKIVNILTQF). A helical transmembrane segment spans residues 572-592 (VPQMIFLWSIFGYMSVLIILK). The Vacuolar segment spans residues 593–639 (WVVPYRSFEVDKVDPPFILPTIIAMFLSPGGTPDVVFFSGQGAVQTA). Residues 640–659 (LLFLALISIPVMLVIKPLFM) form a helical membrane-spanning segment. Residues 660-706 (KRFHFQEVERKKLGHHEEEHDDEALYTGHHGEEFEMGEVFVHQVIHT) are Cytoplasmic-facing. The chain crosses the membrane as a helical span at residues 707–731 (IEFVLGAVSNTASYLRLWALSLAHS). At 732-749 (ELSSVFWERILIGQVERG) the chain is on the vacuolar side. Residues 750-788 (NPFLAFVGFGAWLGASVAVLLLMESLSAFLHALRLHWVE) traverse the membrane as a helical segment. Residues 789–815 (FQNKFYIGDGVRFIPYSATRILSEDDE) are Cytoplasmic-facing.

The protein belongs to the V-ATPase 116 kDa subunit family. As to quaternary structure, the V-ATPase is a heteromultimeric enzyme.

It localises to the cytoplasmic vesicle membrane. The protein localises to the endosome membrane. It is found in the vacuole membrane. Its subcellular location is the lysosome membrane. Essential component of the vacuolar proton pump (V-ATPase), a multimeric enzyme that catalyzes the translocation of protons across the membranes. Required for assembly and activity of the V-ATPase. Required in both the contractile vacuole system and the endosomal/lysosomal system. Also required for cytosolic pH regulation. The protein is Vacuolar proton translocating ATPase 100 kDa subunit (vatM) of Dictyostelium discoideum (Social amoeba).